The following is a 328-amino-acid chain: NADH-quinone oxidoreductase subunit H 2 (328 aa).

The next 8 helical transmembrane spans lie at 3-23 (LIVA…ILLL), 77-97 (FLFK…FAAI), 119-139 (VALL…IFGG), 165-185 (MGFA…LDIV), 191-211 (VWNV…GLAE), 250-270 (MVLV…GVLI), 272-292 (LPPL…FMWF), and 307-327 (IGWK…GVVF).

This sequence belongs to the complex I subunit 1 family. In terms of assembly, NDH-1 is composed of 14 different subunits. Subunits NuoA, H, J, K, L, M, N constitute the membrane sector of the complex.

The protein localises to the cell inner membrane. It catalyses the reaction a quinone + NADH + 5 H(+)(in) = a quinol + NAD(+) + 4 H(+)(out). In terms of biological role, NDH-1 shuttles electrons from NADH, via FMN and iron-sulfur (Fe-S) centers, to quinones in the respiratory chain. The immediate electron acceptor for the enzyme in this species is believed to be ubiquinone. Couples the redox reaction to proton translocation (for every two electrons transferred, four hydrogen ions are translocated across the cytoplasmic membrane), and thus conserves the redox energy in a proton gradient. This subunit may bind ubiquinone. The polypeptide is NADH-quinone oxidoreductase subunit H 2 (Rhizobium meliloti (strain 1021) (Ensifer meliloti)).